Consider the following 323-residue polypeptide: Fructose-1,6-bisphosphatase class 1 (323 aa).

Mg(2+)-binding residues include glutamate 88, aspartate 107, leucine 109, and aspartate 110. Substrate is bound by residues 110–113 and asparagine 200; that span reads DGSS. Glutamate 272 is a Mg(2+) binding site.

Belongs to the FBPase class 1 family. In terms of assembly, homotetramer. Mg(2+) is required as a cofactor.

The protein resides in the cytoplasm. The catalysed reaction is beta-D-fructose 1,6-bisphosphate + H2O = beta-D-fructose 6-phosphate + phosphate. It functions in the pathway carbohydrate biosynthesis; gluconeogenesis. This chain is Fructose-1,6-bisphosphatase class 1, found in Acinetobacter baylyi (strain ATCC 33305 / BD413 / ADP1).